A 238-amino-acid polypeptide reads, in one-letter code: MQAPKHHRRLFAVLATLNTATAVIAGCSSGSNLSSGPLPDATTWVKQATDITKNVTSAHLVLSVNGKITGLPVKTLTGDLTTHPNTVASGNATITLDGADLNANFVVVDGELYATLTPSKWSDFGKASDIYDVASILNPDAGLANVLANFTGAKTEGRDSINGQSAVRISGNVSADAVNKIAPPFNATQPMPATVWIQETGDHQLAQIRIDNKSSGNSVQMTLSNWDEPVQVTKPQVS.

An N-terminal signal peptide occupies residues 1–26 (MQAPKHHRRLFAVLATLNTATAVIAG). A lipid anchor (N-palmitoyl cysteine) is attached at Cys27. Residue Cys27 is the site of S-diacylglycerol cysteine attachment.

This sequence belongs to the LppX/LprAFG lipoprotein family. In terms of processing, modified by Lgt on Cys-27 with an S-linked diacylglyceral, signal peptide is removed by LspA, Cys-27 is further modifed with a fatty acid on its amino group by Lnt yielding a triacylated protein. Probably glycosylated, which is required for T-cell activation.

It is found in the cell inner membrane. Its subcellular location is the secreted. It localises to the cell wall. In terms of biological role, helps membrane protein ML0556 (P55) transport triacylglycerides (TAG) across the inner cell membrane into the periplasm and probably ultimately to the outer membrane. Binds TAG in its hydrophobic cavity and transfers it between lipid bilayers. TAG probably regulates lipid metabolism and growth regulation and plays a structural role in the outer membrane. Binds di- and triacylated phosphatidyl-myo-inositol mannosides (PIMs), and glycolipid lipoglycan modulins lipoarabinomannan (LAM) and lipomannan (LM), facilitating their recognition by TLR2. Required for activity of drug efflux transporter ML0556. Required, probably with ML0556, for normal surface localization of LAM. Its function is as follows. Constitutes a host TLR2 agonist (toll-like receptor) able to stimulate proliferation of CD4+ T-cells derived from a human leprosy patient following protein processing/presentation by MHC class II molecules in peripheral blood mononuclear cells. This chain is Lipoarabinomannan carrier protein LprG, found in Mycobacterium leprae (strain TN).